Reading from the N-terminus, the 171-residue chain is Crossover junction endodeoxyribonuclease RuvC (171 aa).

Catalysis depends on residues Asp7, Glu66, and Asp138. Mg(2+) contacts are provided by Asp7, Glu66, and Asp138.

The protein belongs to the RuvC family. In terms of assembly, homodimer which binds Holliday junction (HJ) DNA. The HJ becomes 2-fold symmetrical on binding to RuvC with unstacked arms; it has a different conformation from HJ DNA in complex with RuvA. In the full resolvosome a probable DNA-RuvA(4)-RuvB(12)-RuvC(2) complex forms which resolves the HJ. It depends on Mg(2+) as a cofactor.

The protein localises to the cytoplasm. It catalyses the reaction Endonucleolytic cleavage at a junction such as a reciprocal single-stranded crossover between two homologous DNA duplexes (Holliday junction).. In terms of biological role, the RuvA-RuvB-RuvC complex processes Holliday junction (HJ) DNA during genetic recombination and DNA repair. Endonuclease that resolves HJ intermediates. Cleaves cruciform DNA by making single-stranded nicks across the HJ at symmetrical positions within the homologous arms, yielding a 5'-phosphate and a 3'-hydroxyl group; requires a central core of homology in the junction. The consensus cleavage sequence is 5'-(A/T)TT(C/G)-3'. Cleavage occurs on the 3'-side of the TT dinucleotide at the point of strand exchange. HJ branch migration catalyzed by RuvA-RuvB allows RuvC to scan DNA until it finds its consensus sequence, where it cleaves and resolves the cruciform DNA. The chain is Crossover junction endodeoxyribonuclease RuvC from Francisella tularensis subsp. holarctica (strain FTNF002-00 / FTA).